The primary structure comprises 457 residues: Histidine--tRNA ligase (457 aa).

Belongs to the class-II aminoacyl-tRNA synthetase family. In terms of assembly, homodimer.

The protein resides in the cytoplasm. The enzyme catalyses tRNA(His) + L-histidine + ATP = L-histidyl-tRNA(His) + AMP + diphosphate + H(+). The sequence is that of Histidine--tRNA ligase from Mesoplasma florum (strain ATCC 33453 / NBRC 100688 / NCTC 11704 / L1) (Acholeplasma florum).